Here is a 242-residue protein sequence, read N- to C-terminus: uncharacterized protein (242 aa).

The protein resides in the cytoplasm. The protein localises to the nucleus. This is an uncharacterized protein from Schizosaccharomyces pombe (strain 972 / ATCC 24843) (Fission yeast).